The primary structure comprises 296 residues: MVRNERTLKSTDFPQLPPAPDDYPTFPDKSTWPVVFPMLPPSPDGGPRRPPQHTSKAVAPRLSAAQLPTHVAIVMDGNGRWANQRGLHRTEGHKMGEAVVIDVACGAIELGIKWLSLYAFSTENWKRSVEEVRFLMGFNRDVVRRRRENLKEMGVRIRWVGSRPRLWRSVINELAIAEHMTAGNDVITINYCVNYGGRTEIAEATREIARLAAAGRLNPERITESTITRHLQRPDIPDVDLFVRTSGEQRSSNFMLWQAAYTEYIFQDKLWPDYDRRDLWAACEEYASRNRRFGSA.

The segment at 1-58 (MVRNERTLKSTDFPQLPPAPDDYPTFPDKSTWPVVFPMLPPSPDGGPRRPPQHTSKAV) is disordered. Asp-76 is an active-site residue. Asp-76 serves as a coordination point for Mg(2+). Substrate-binding positions include 77–80 (GNGR), Trp-81, Arg-89, His-93, and 121–123 (STE). Asn-124 serves as the catalytic Proton acceptor. Substrate is bound by residues Trp-125, Arg-127, Arg-244, and 250-252 (RSS). Glu-263 is a Mg(2+) binding site.

This sequence belongs to the UPP synthase family. In terms of assembly, homodimer. The cofactor is Mg(2+).

It localises to the cell membrane. The catalysed reaction is (2Z,6E)-farnesyl diphosphate + 7 isopentenyl diphosphate = (2Z,6Z,10Z,14Z,18Z,22Z,26Z,30Z,34E)-decaprenyl diphosphate + 7 diphosphate. The enzyme catalyses n isopentenyl diphosphate + (2E,6E)-farnesyl diphosphate = a di-trans,poly-cis-polyprenyl diphosphate + n diphosphate. In terms of biological role, catalyzes the sequential condensation of isopentenyl diphosphate (IPP) in the cis configuration with (2Z,6E)-farnesyl diphosphate (Z-FPP or EZ-FPP) generating the 50 carbon product trans,polycis-decaprenyl diphosphate. When (2E,6E)-farnesyl diphosphate (E-FPP or EE-FPP) is used in vitro, both primary products decaprenyl diphosphate and (2E,6E,10E)-geranylgeranyl diphosphate (EEE-GGPP) are synthesized. M.tuberculosis does not synthesize (2E,6E,10Z)-geranylgeranyl diphosphate (EEZ-GGPP) and heptaprenyl diphosphate. Can also accept many different allylic substrates, including E-geranyl diphosphate (E-GPP), neryl diphosphate (NPP), and all-trans-geranyl-geranyl diphosphate. The chain is Decaprenyl diphosphate synthase (uppS) from Mycobacterium leprae (strain TN).